Here is a 217-residue protein sequence, read N- to C-terminus: MKYQLTAHEARVIGCLLEKQVTTPEQYPLSVNAVVTACNQKTNREPVMSLSEGEVQTLLDTLVKRHYLRTVSGFGNRVTKYEQRFCNSEFGDLKLSAGEVAVVTTLLLRGAQTPGELRSRAQRMHEFSDMAEVESVLEGLATREDGPFVARLPREPGKRESRYMHLFCDDMDTLITTVEALSPLEDDDDLRARVEALEGEVAELKARLDSLLHHLGD.

This sequence belongs to the UPF0502 family.

In Klebsiella pneumoniae (strain 342), this protein is UPF0502 protein KPK_3478.